Reading from the N-terminus, the 104-residue chain is ATP synthase subunit c (104 aa).

A run of 2 helical transmembrane segments spans residues 31–51 (SMIA…IGMG) and 75–95 (MFIA…IALI).

It belongs to the ATPase C chain family. F-type ATPases have 2 components, F(1) - the catalytic core - and F(0) - the membrane proton channel. F(1) has five subunits: alpha(3), beta(3), gamma(1), delta(1), epsilon(1). F(0) has three main subunits: a(1), b(2) and c(10-14). The alpha and beta chains form an alternating ring which encloses part of the gamma chain. F(1) is attached to F(0) by a central stalk formed by the gamma and epsilon chains, while a peripheral stalk is formed by the delta and b chains.

Its subcellular location is the cell inner membrane. F(1)F(0) ATP synthase produces ATP from ADP in the presence of a proton or sodium gradient. F-type ATPases consist of two structural domains, F(1) containing the extramembraneous catalytic core and F(0) containing the membrane proton channel, linked together by a central stalk and a peripheral stalk. During catalysis, ATP synthesis in the catalytic domain of F(1) is coupled via a rotary mechanism of the central stalk subunits to proton translocation. Its function is as follows. Key component of the F(0) channel; it plays a direct role in translocation across the membrane. A homomeric c-ring of between 10-14 subunits forms the central stalk rotor element with the F(1) delta and epsilon subunits. This is ATP synthase subunit c from Sulfurimonas denitrificans (strain ATCC 33889 / DSM 1251) (Thiomicrospira denitrificans (strain ATCC 33889 / DSM 1251)).